The chain runs to 315 residues: Ribosomal RNA small subunit methyltransferase H (315 aa).

Residues 37 to 39, aspartate 57, phenylalanine 83, aspartate 105, and glutamine 112 contribute to the S-adenosyl-L-methionine site; that span reads GGH.

The protein belongs to the methyltransferase superfamily. RsmH family.

It is found in the cytoplasm. It catalyses the reaction cytidine(1402) in 16S rRNA + S-adenosyl-L-methionine = N(4)-methylcytidine(1402) in 16S rRNA + S-adenosyl-L-homocysteine + H(+). Its function is as follows. Specifically methylates the N4 position of cytidine in position 1402 (C1402) of 16S rRNA. The protein is Ribosomal RNA small subunit methyltransferase H of Pseudomonas fluorescens (strain SBW25).